Reading from the N-terminus, the 263-residue chain is Ribosomal RNA small subunit methyltransferase J (263 aa).

Residues 115-116 (RD), 131-132 (ER), and D181 each bind S-adenosyl-L-methionine.

This sequence belongs to the methyltransferase superfamily. RsmJ family.

The protein localises to the cytoplasm. The catalysed reaction is guanosine(1516) in 16S rRNA + S-adenosyl-L-methionine = N(2)-methylguanosine(1516) in 16S rRNA + S-adenosyl-L-homocysteine + H(+). Its function is as follows. Specifically methylates the guanosine in position 1516 of 16S rRNA. The sequence is that of Ribosomal RNA small subunit methyltransferase J from Hahella chejuensis (strain KCTC 2396).